The following is an 838-amino-acid chain: Envelope glycoprotein H (838 aa).

Positions 1–18 (MGNGLWFVGVIILGAAWG) are cleaved as a signal peptide. At 19-803 (QVHDWTEQTD…DTQPVAAIAP (785 aa)) the chain is on the virion surface side. Residues Asn-73 and Asn-120 are each glycosylated (N-linked (GlcNAc...) asparagine; by host). The disordered stretch occupies residues 174–204 (FPRGDNVATASHPSGPRDTPPPRPPVGARRH). Residue Asn-216 is glycosylated (N-linked (GlcNAc...) asparagine; by host). An interaction with gL region spans residues 259–323 (DAALVRARYG…PGGPRYRVFV (65 aa)). 4 N-linked (GlcNAc...) asparagine; by host glycosylation sites follow: Asn-332, Asn-437, Asn-670, and Asn-784. The chain crosses the membrane as a helical span at residues 804-824 (GFLAASALGVVMITAALAGIL). At 825-838 (KVLRTSVPFFWRRE) the chain is on the intravirion side.

The protein belongs to the herpesviridae glycoprotein H family. In terms of assembly, interacts with glycoprotein L (gL); this interaction is necessary for the correct processing and cell surface expression of gH. The heterodimer gH/gL seems to interact with gB trimers during fusion. N-glycosylated, O-glycosylated, and sialylated.

It localises to the virion membrane. Its subcellular location is the host cell membrane. It is found in the host endosome membrane. Functionally, the heterodimer glycoprotein H-glycoprotein L is required for the fusion of viral and plasma membranes leading to virus entry into the host cell. Following initial binding to host receptor, membrane fusion is mediated by the fusion machinery composed of gB and the heterodimer gH/gL. May also be involved in the fusion between the virion envelope and the outer nuclear membrane during virion morphogenesis. This Homo sapiens (Human) protein is Envelope glycoprotein H.